A 25-amino-acid chain; its full sequence is Galactose-binding lectin-2 (25 aa).

In terms of assembly, homodimer. In terms of processing, N-glycosylated.

Functionally, D-galactose specific lectin. Binds in decreasing order of affinity: melibiose, N-acetyllactosamine, D-galacturonic acid, D-galactose, methyl-alpha-D-galactoside, D-galactose, methyl-alpha-D-galactopyranoside, methyl-beta-D-galactopyranoside and lactose. Binds also the glycoproteins globotriose, asialofetuin and mucin. Possesses glycan-dependent cytotoxic activity against Burkitt's lymphoma Raji cells and erythroleukemia K562 cells. Has calcium-independent hemagglutinating activity towards human erythrocytes. This Aplysia kurodai (Kuroda's sea hare) protein is Galactose-binding lectin-2.